An 80-amino-acid polypeptide reads, in one-letter code: Beta-toxin KAaH1 (80 aa).

A signal peptide spans 1–22 (MMKLMLFSIIVILFSLIGSIHG). The LCN-type CS-alpha/beta domain maps to 25–80 (VPGNYPLDSSDDTYLCAPLGENPFCIKICRKHGVKYGYCYAFQCWCEYLEDKNVKI). Intrachain disulfides connect cysteine 40-cysteine 63, cysteine 49-cysteine 68, and cysteine 53-cysteine 70.

This sequence belongs to the long (3 C-C) scorpion toxin superfamily. Sodium/Potassium channel inhibitor family. In terms of tissue distribution, expressed by the venom gland.

The protein resides in the secreted. Its function is as follows. Inhibits the vertebrate potassium channels Kv1.1/KCNA1 and Kv1.3/KCNA3 in vitro with an IC(50) of 5.3 nM and 50.0 nM respectively. In Androctonus australis (Sahara scorpion), this protein is Beta-toxin KAaH1.